Consider the following 426-residue polypeptide: Serine--tRNA ligase (426 aa).

233 to 235 (TSE) contributes to the L-serine binding site. 264 to 266 (RAE) serves as a coordination point for ATP. E287 is an L-serine binding site. 351–354 (EISS) serves as a coordination point for ATP. An L-serine-binding site is contributed by S387.

This sequence belongs to the class-II aminoacyl-tRNA synthetase family. Type-1 seryl-tRNA synthetase subfamily. In terms of assembly, homodimer. The tRNA molecule binds across the dimer.

The protein localises to the cytoplasm. It catalyses the reaction tRNA(Ser) + L-serine + ATP = L-seryl-tRNA(Ser) + AMP + diphosphate + H(+). The catalysed reaction is tRNA(Sec) + L-serine + ATP = L-seryl-tRNA(Sec) + AMP + diphosphate + H(+). It participates in aminoacyl-tRNA biosynthesis; selenocysteinyl-tRNA(Sec) biosynthesis; L-seryl-tRNA(Sec) from L-serine and tRNA(Sec): step 1/1. Its function is as follows. Catalyzes the attachment of serine to tRNA(Ser). Is also able to aminoacylate tRNA(Sec) with serine, to form the misacylated tRNA L-seryl-tRNA(Sec), which will be further converted into selenocysteinyl-tRNA(Sec). This Stenotrophomonas maltophilia (strain K279a) protein is Serine--tRNA ligase.